The chain runs to 434 residues: F-box only protein 15 (434 aa).

The F-box domain occupies 1–41 (MPSEILLKIFSYLDAVSLLCAGCVSRRFYHLANDNFIWIRI).

As to quaternary structure, directly interacts with SKP1 and CUL1.

Substrate-recognition component of the SCF (SKP1-CUL1-F-box protein)-type E3 ubiquitin ligase complex. This Macaca fascicularis (Crab-eating macaque) protein is F-box only protein 15 (FBXO15).